A 129-amino-acid polypeptide reads, in one-letter code: Glycine cleavage system H protein (129 aa).

The Lipoyl-binding domain occupies 24–106; sequence HAVVGITDFA…YDGGWLFKLA (83 aa). N6-lipoyllysine is present on Lys-65.

Belongs to the GcvH family. In terms of assembly, the glycine cleavage system is composed of four proteins: P, T, L and H. The cofactor is (R)-lipoate.

In terms of biological role, the glycine cleavage system catalyzes the degradation of glycine. The H protein shuttles the methylamine group of glycine from the P protein to the T protein. In Hydrogenovibrio crunogenus (strain DSM 25203 / XCL-2) (Thiomicrospira crunogena), this protein is Glycine cleavage system H protein.